The sequence spans 125 residues: Ribosome-binding factor A (125 aa).

The protein belongs to the RbfA family. Monomer. Binds 30S ribosomal subunits, but not 50S ribosomal subunits or 70S ribosomes.

It is found in the cytoplasm. In terms of biological role, one of several proteins that assist in the late maturation steps of the functional core of the 30S ribosomal subunit. Associates with free 30S ribosomal subunits (but not with 30S subunits that are part of 70S ribosomes or polysomes). Required for efficient processing of 16S rRNA. May interact with the 5'-terminal helix region of 16S rRNA. This chain is Ribosome-binding factor A, found in Kosmotoga olearia (strain ATCC BAA-1733 / DSM 21960 / TBF 19.5.1).